A 72-amino-acid chain; its full sequence is Large ribosomal subunit protein uL29 (72 aa).

It belongs to the universal ribosomal protein uL29 family.

The chain is Large ribosomal subunit protein uL29 from Prochlorococcus marinus (strain MIT 9301).